The sequence spans 443 residues: Thymidine phosphorylase (443 aa).

The protein belongs to the thymidine/pyrimidine-nucleoside phosphorylase family. As to quaternary structure, homodimer.

The catalysed reaction is thymidine + phosphate = 2-deoxy-alpha-D-ribose 1-phosphate + thymine. It functions in the pathway pyrimidine metabolism; dTMP biosynthesis via salvage pathway; dTMP from thymine: step 1/2. Functionally, the enzymes which catalyze the reversible phosphorolysis of pyrimidine nucleosides are involved in the degradation of these compounds and in their utilization as carbon and energy sources, or in the rescue of pyrimidine bases for nucleotide synthesis. This is Thymidine phosphorylase from Sodalis glossinidius (strain morsitans).